The following is a 217-amino-acid chain: uncharacterized protein (217 aa).

A helical membrane pass occupies residues 26–48 (VFMRGYVVGLVLALMLVTAPAMA).

It is found in the membrane. This is an uncharacterized protein from Archaeoglobus fulgidus (strain ATCC 49558 / DSM 4304 / JCM 9628 / NBRC 100126 / VC-16).